The sequence spans 196 residues: Large ribosomal subunit protein eL15 (196 aa).

The segment covering 162–172 (RGKTSAGRRAR) has biased composition (basic residues). The interval 162 to 196 (RGKTSAGRRARGLQNRGKGTEGLRPSTNADKRNKS) is disordered.

The protein belongs to the eukaryotic ribosomal protein eL15 family.

The polypeptide is Large ribosomal subunit protein eL15 (Halobacterium salinarum (strain ATCC 29341 / DSM 671 / R1)).